The sequence spans 1201 residues: DNA-directed RNA polymerase subunit beta' (1201 aa).

Residues Cys-60, Cys-62, Cys-75, and Cys-78 each coordinate Zn(2+). Mg(2+) is bound by residues Asp-449, Asp-451, and Asp-453. Positions 818, 892, 899, and 902 each coordinate Zn(2+).

Belongs to the RNA polymerase beta' chain family. In terms of assembly, the RNAP catalytic core consists of 2 alpha, 1 beta, 1 beta' and 1 omega subunit. When a sigma factor is associated with the core the holoenzyme is formed, which can initiate transcription. Requires Mg(2+) as cofactor. Zn(2+) is required as a cofactor.

The catalysed reaction is RNA(n) + a ribonucleoside 5'-triphosphate = RNA(n+1) + diphosphate. Functionally, DNA-dependent RNA polymerase catalyzes the transcription of DNA into RNA using the four ribonucleoside triphosphates as substrates. This chain is DNA-directed RNA polymerase subunit beta', found in Listeria monocytogenes serotype 4b (strain F2365).